A 119-amino-acid polypeptide reads, in one-letter code: Early E3 13.3 kDa protein (119 aa).

This chain is Early E3 13.3 kDa protein, found in Canine adenovirus serotype 1 (strain Utrecht) (CAdV-1).